Here is a 457-residue protein sequence, read N- to C-terminus: MYLKAYHIYFVGIGGIGMSGIAELLLNLGYTVSGSDIRQSDITDRLTGLGGKIFYGHDGKNIGGADVVVVSSAIAADNPEVAAAREAGIPVIPRAEMLAEILRLKYSIVIAGAHGKTSTTSMVASVLGQGGMDPTVVIGGKLKSIGTNAVLGHGDYIVAEADESDGSFLKFSPSIAVVTNIDREHLDFYPDLAAISKSFLEFLDRIPFYGVAVVCLDNEPLQALVPLIKKRFITYGTSNQADLQARHITPINGKVRFSVVWRQEELGTIDLGVPGFHNVRNALAAVAVGLELGLAFAVIKEALETMAGVQRRLEKKGETGGVIVVDDYGHHPTEIKATLQGVRQHWEDRRVVVVFQPHRYSRTKALFDDFTRAFYQCDELVVLPIYAAGEHPIDGVDGESVAEGIRAHGHKGVRYVEGRAEAVAYLKEILQKGDILLTLGAGDVWRIGEDVLSGQER.

ATP is bound at residue glycine 112–serine 118.

The protein belongs to the MurCDEF family.

The protein resides in the cytoplasm. The catalysed reaction is UDP-N-acetyl-alpha-D-muramate + L-alanine + ATP = UDP-N-acetyl-alpha-D-muramoyl-L-alanine + ADP + phosphate + H(+). It participates in cell wall biogenesis; peptidoglycan biosynthesis. Functionally, cell wall formation. The sequence is that of UDP-N-acetylmuramate--L-alanine ligase from Desulfosudis oleivorans (strain DSM 6200 / JCM 39069 / Hxd3) (Desulfococcus oleovorans).